Here is a 98-residue protein sequence, read N- to C-terminus: Putative protein adenylyltransferase MJ0126 (98 aa).

A GSX(10)DXD motif motif is present at residues 31–45; the sequence is GSYARNEQTETSDID. The Mg(2+) site is built by aspartate 43, aspartate 45, and aspartate 75.

This sequence belongs to the MntA antitoxin family. As to quaternary structure, probably forms a complex with cognate toxin MJ0125. It depends on Mg(2+) as a cofactor.

It catalyses the reaction L-tyrosyl-[protein] + ATP = O-(5'-adenylyl)-L-tyrosyl-[protein] + diphosphate. The enzyme catalyses O-(5'-adenylyl)-L-tyrosyl-[protein] + ATP = O-[5'-(adenylyl-(5'-&gt;3')-adenylyl)]-L-tyrosyl-[protein] + diphosphate. In terms of biological role, probable antitoxin component of a putative type VII toxin-antitoxin (TA) system. Neutralizes cognate toxic MJ0125 by di-AMPylation. This chain is Putative protein adenylyltransferase MJ0126, found in Methanocaldococcus jannaschii (strain ATCC 43067 / DSM 2661 / JAL-1 / JCM 10045 / NBRC 100440) (Methanococcus jannaschii).